Here is a 146-residue protein sequence, read N- to C-terminus: Deoxyuridine 5'-triphosphate nucleotidohydrolase (146 aa).

Substrate-binding positions include 65–67, N78, and 82–84; these read RSG and TID.

The protein belongs to the dUTPase family. Requires Mg(2+) as cofactor.

It carries out the reaction dUTP + H2O = dUMP + diphosphate + H(+). It functions in the pathway pyrimidine metabolism; dUMP biosynthesis; dUMP from dCTP (dUTP route): step 2/2. Its function is as follows. This enzyme is involved in nucleotide metabolism: it produces dUMP, the immediate precursor of thymidine nucleotides and it decreases the intracellular concentration of dUTP so that uracil cannot be incorporated into DNA. This Treponema pallidum subsp. pallidum (strain SS14) protein is Deoxyuridine 5'-triphosphate nucleotidohydrolase.